Consider the following 233-residue polypeptide: Uridylate kinase (233 aa).

9 to 10 (GS) serves as a coordination point for ATP. A UMP-binding site is contributed by glycine 43. ATP-binding residues include glycine 44 and arginine 48. Residues aspartate 65 and 113–119 (VTPGQTT) each bind UMP. ATP is bound by residues threonine 139, tyrosine 145, and aspartate 148.

It belongs to the UMP kinase family. As to quaternary structure, homohexamer.

The protein localises to the cytoplasm. It carries out the reaction UMP + ATP = UDP + ADP. It participates in pyrimidine metabolism; CTP biosynthesis via de novo pathway; UDP from UMP (UMPK route): step 1/1. Inhibited by UTP. In terms of biological role, catalyzes the reversible phosphorylation of UMP to UDP. The sequence is that of Uridylate kinase from Methanosarcina acetivorans (strain ATCC 35395 / DSM 2834 / JCM 12185 / C2A).